The chain runs to 188 residues: UPF0301 protein PsycPRwf_0144 (188 aa).

It belongs to the UPF0301 (AlgH) family.

The chain is UPF0301 protein PsycPRwf_0144 from Psychrobacter sp. (strain PRwf-1).